A 154-amino-acid chain; its full sequence is Stigma-specific STIG1-like protein 3 (154 aa).

The first 23 residues, 1 to 23 (MGHRNTVLTILLTISIAIMVLIA), serve as a signal peptide directing secretion.

The protein belongs to the STIG1 family.

The polypeptide is Stigma-specific STIG1-like protein 3 (Arabidopsis thaliana (Mouse-ear cress)).